Reading from the N-terminus, the 232-residue chain is Ribose-5-phosphate isomerase A (232 aa).

Substrate contacts are provided by residues 31-34, 87-90, and 100-103; these read TGST, DGAD, and KGGG. Glutamate 109 acts as the Proton acceptor in catalysis. A substrate-binding site is contributed by lysine 127.

Belongs to the ribose 5-phosphate isomerase family. Homodimer.

It catalyses the reaction aldehydo-D-ribose 5-phosphate = D-ribulose 5-phosphate. It participates in carbohydrate degradation; pentose phosphate pathway; D-ribose 5-phosphate from D-ribulose 5-phosphate (non-oxidative stage): step 1/1. In terms of biological role, catalyzes the reversible conversion of ribose-5-phosphate to ribulose 5-phosphate. The polypeptide is Ribose-5-phosphate isomerase A (Bifidobacterium longum (strain DJO10A)).